The chain runs to 545 residues: Thermosome subunit alpha (545 aa).

A disordered region spans residues 522–545 (KKSTPPSGQGGQGQGMPGGGMPEY). Residues 529-545 (GQGGQGQGMPGGGMPEY) show a composition bias toward gly residues.

The protein belongs to the TCP-1 chaperonin family. In terms of assembly, forms a Heterooligomeric complex of two stacked eight-membered rings. In terms of processing, the N-terminus is blocked.

Its function is as follows. Molecular chaperone; binds unfolded polypeptides in vitro, and has a weak ATPase activity. The sequence is that of Thermosome subunit alpha (thsA) from Thermoplasma acidophilum (strain ATCC 25905 / DSM 1728 / JCM 9062 / NBRC 15155 / AMRC-C165).